Consider the following 61-residue polypeptide: Large ribosomal subunit protein uL30 (61 aa).

The protein belongs to the universal ribosomal protein uL30 family. As to quaternary structure, part of the 50S ribosomal subunit.

In Laribacter hongkongensis (strain HLHK9), this protein is Large ribosomal subunit protein uL30.